A 244-amino-acid chain; its full sequence is Small ribosomal subunit protein eS4 (244 aa).

The 66-residue stretch at 43 to 108 folds into the S4 RNA-binding domain; it reads LPLLLIVRDI…NYRVLFDRKG (66 aa).

Belongs to the eukaryotic ribosomal protein eS4 family.

This is Small ribosomal subunit protein eS4 (rps4e) from Methanocaldococcus jannaschii (strain ATCC 43067 / DSM 2661 / JAL-1 / JCM 10045 / NBRC 100440) (Methanococcus jannaschii).